The sequence spans 37 residues: MKVRSSVKKICEKCKIVRRGGRVFVICENPRHKQKQG.

It belongs to the bacterial ribosomal protein bL36 family.

This Dictyoglomus thermophilum (strain ATCC 35947 / DSM 3960 / H-6-12) protein is Large ribosomal subunit protein bL36.